We begin with the raw amino-acid sequence, 407 residues long: Aminomethyltransferase, mitochondrial (407 aa).

A mitochondrion-targeting transit peptide spans 1–29 (MRGGLWQLGQSITRRLGQSDKKTIARRCY). The substrate site is built by Glu-234, Arg-265, and Tyr-403.

This sequence belongs to the GcvT family. As to quaternary structure, the glycine cleavage system is composed of four proteins: P, T, L and H.

It is found in the mitochondrion. The catalysed reaction is N(6)-[(R)-S(8)-aminomethyldihydrolipoyl]-L-lysyl-[protein] + (6S)-5,6,7,8-tetrahydrofolate = N(6)-[(R)-dihydrolipoyl]-L-lysyl-[protein] + (6R)-5,10-methylene-5,6,7,8-tetrahydrofolate + NH4(+). The glycine cleavage system catalyzes the degradation of glycine. In Flaveria pringlei, this protein is Aminomethyltransferase, mitochondrial (GDCST).